Consider the following 363-residue polypeptide: Dihydroorotate dehydrogenase (quinone) (363 aa).

Residues 70-74 and T94 each bind FMN; that span reads AGFDK. Residue K74 participates in substrate binding. Residue 119–123 coordinates substrate; the sequence is NRMGF. N147 and N180 together coordinate FMN. Position 180 (N180) interacts with substrate. S183 acts as the Nucleophile in catalysis. N185 lines the substrate pocket. Positions 216 and 244 each coordinate FMN. A substrate-binding site is contributed by 245–246; the sequence is NT. FMN contacts are provided by residues G270, G299, and 320-321; that span reads YT.

The protein belongs to the dihydroorotate dehydrogenase family. Type 2 subfamily. As to quaternary structure, monomer. FMN serves as cofactor.

Its subcellular location is the cell membrane. The enzyme catalyses (S)-dihydroorotate + a quinone = orotate + a quinol. The protein operates within pyrimidine metabolism; UMP biosynthesis via de novo pathway; orotate from (S)-dihydroorotate (quinone route): step 1/1. Catalyzes the conversion of dihydroorotate to orotate with quinone as electron acceptor. In Corynebacterium diphtheriae (strain ATCC 700971 / NCTC 13129 / Biotype gravis), this protein is Dihydroorotate dehydrogenase (quinone).